Consider the following 252-residue polypeptide: Isoprenyl transferase (252 aa).

Asp-32 is a catalytic residue. Residue Asp-32 participates in Mg(2+) binding. Residues 33–36, Trp-37, Arg-45, His-49, and 77–79 contribute to the substrate site; these read GNGR and STE. Asn-80 functions as the Proton acceptor in the catalytic mechanism. Substrate-binding positions include Trp-81, Arg-83, Arg-200, and 206–208; that span reads RLS. Mg(2+) is bound at residue Glu-219.

Belongs to the UPP synthase family. As to quaternary structure, homodimer. Requires Mg(2+) as cofactor.

Its function is as follows. Catalyzes the condensation of isopentenyl diphosphate (IPP) with allylic pyrophosphates generating different type of terpenoids. In Listeria innocua serovar 6a (strain ATCC BAA-680 / CLIP 11262), this protein is Isoprenyl transferase.